The primary structure comprises 70 residues: Large ribosomal subunit protein eL38 (70 aa).

This sequence belongs to the eukaryotic ribosomal protein eL38 family.

The polypeptide is Large ribosomal subunit protein eL38 (RpL38) (Lonomia obliqua (Moth)).